Consider the following 78-residue polypeptide: Neurogranin (78 aa).

N-acetylmethionine is present on M1. Residues A26–G49 form the IQ domain. The residue at position 36 (S36) is a Phosphoserine; by PHK and PKC. Residues R38–D78 are disordered. Positions E50 to D78 constitute a Collagen-like domain. The segment covering G55 to D78 has biased composition (gly residues). Citrulline; partial is present on R68. R68 is modified (omega-N-methylarginine).

The protein belongs to the neurogranin family. The N-terminus is blocked. Post-translationally, phosphorylated at Ser-36 by PHK and PKC. Phosphorylation prevents interaction with Calmodulin and interrupts several learning- and memory-associated functions. As to expression, is highly enriched in brain. Accumulates postsynaptically in dendritic spines of neostriatal neurons.

Its function is as follows. Acts as a 'third messenger' substrate of protein kinase C-mediated molecular cascades during synaptic development and remodeling. Binds to calmodulin in the absence of calcium. This chain is Neurogranin (NRGN), found in Bos taurus (Bovine).